The sequence spans 120 residues: NAD(P)H-quinone oxidoreductase subunit 3, chloroplastic (120 aa).

3 helical membrane passes run 10–30 (FWVFLIISSLIPILAFLISGV), 64–84 (IFALVFVVFDVETVFLYPWAM), and 88–108 (VLGVSVFIEALVFVLILIVGS).

It belongs to the complex I subunit 3 family. In terms of assembly, NDH is composed of at least 16 different subunits, 5 of which are encoded in the nucleus.

The protein localises to the plastid. It localises to the chloroplast thylakoid membrane. The enzyme catalyses a plastoquinone + NADH + (n+1) H(+)(in) = a plastoquinol + NAD(+) + n H(+)(out). It catalyses the reaction a plastoquinone + NADPH + (n+1) H(+)(in) = a plastoquinol + NADP(+) + n H(+)(out). Functionally, NDH shuttles electrons from NAD(P)H:plastoquinone, via FMN and iron-sulfur (Fe-S) centers, to quinones in the photosynthetic chain and possibly in a chloroplast respiratory chain. The immediate electron acceptor for the enzyme in this species is believed to be plastoquinone. Couples the redox reaction to proton translocation, and thus conserves the redox energy in a proton gradient. The protein is NAD(P)H-quinone oxidoreductase subunit 3, chloroplastic of Pelargonium hortorum (Common geranium).